A 49-amino-acid chain; its full sequence is Light-harvesting protein B800/850/890 alpha-3 chain (49 aa).

At 1–14 (MNQARIWLVVKPSV) the chain is on the cytoplasmic side. A helical membrane pass occupies residues 15-35 (GLPLLLGVVLLIALLVHGAIL). A bacteriochlorophyll is bound at residue H31. Residues 36 to 49 (TNTSWYPTYFEGNW) lie on the Periplasmic side of the membrane.

It belongs to the antenna complex alpha subunit family. In terms of assembly, the core complex is formed by different alpha and beta chains, binding bacteriochlorophyll molecules, and arranged most probably in tetrameric structures disposed around the reaction center. The non-pigmented gamma chains may constitute additional components.

The protein resides in the cell inner membrane. Antenna complexes are light-harvesting systems, which transfer the excitation energy to the reaction centers. This chain is Light-harvesting protein B800/850/890 alpha-3 chain, found in Halorhodospira halophila (strain DSM 244 / SL1) (Ectothiorhodospira halophila (strain DSM 244 / SL1)).